The chain runs to 119 residues: Large ribosomal subunit protein bL20 (119 aa).

It belongs to the bacterial ribosomal protein bL20 family.

Functionally, binds directly to 23S ribosomal RNA and is necessary for the in vitro assembly process of the 50S ribosomal subunit. It is not involved in the protein synthesizing functions of that subunit. This Mycoplasma capricolum subsp. capricolum (strain California kid / ATCC 27343 / NCTC 10154) protein is Large ribosomal subunit protein bL20.